We begin with the raw amino-acid sequence, 433 residues long: Adenylyltransferase and sulfurtransferase UBA4 (433 aa).

ATP-binding positions include G70, D91, 98–102 (SNLHR), K115, and 159–160 (DT). Residues C201 and C204 each contribute to the Zn(2+) site. Catalysis depends on C218, which acts as the Glycyl thioester intermediate; for adenylyltransferase activity. Residues C279 and C282 each contribute to the Zn(2+) site. The Rhodanese domain occupies 332–431 (SGNNKVLLDV…YIDDVDQSIP (100 aa)). C390 serves as the catalytic Cysteine persulfide intermediate; for sulfurtransferase activity.

In the N-terminal section; belongs to the HesA/MoeB/ThiF family. UBA4 subfamily. Zn(2+) serves as cofactor.

The protein resides in the cytoplasm. Its subcellular location is the cytosol. It functions in the pathway tRNA modification; 5-methoxycarbonylmethyl-2-thiouridine-tRNA biosynthesis. Its function is as follows. Plays a central role in 2-thiolation of mcm(5)S(2)U at tRNA wobble positions of cytosolic tRNA(Lys), tRNA(Glu) and tRNA(Gln). Acts by mediating the C-terminal thiocarboxylation of sulfur carrier URM1. Its N-terminus first activates URM1 as acyl-adenylate (-COAMP), then the persulfide sulfur on the catalytic cysteine is transferred to URM1 to form thiocarboxylation (-COSH) of its C-terminus. The reaction probably involves hydrogen sulfide that is generated from the persulfide intermediate and that acts as a nucleophile towards URM1. Subsequently, a transient disulfide bond is formed. Does not use thiosulfate as sulfur donor; NFS1 probably acting as a sulfur donor for thiocarboxylation reactions. Prior mcm(5) tRNA modification by the elongator complex is required for 2-thiolation. May also be involved in protein urmylation. In Candida glabrata (strain ATCC 2001 / BCRC 20586 / JCM 3761 / NBRC 0622 / NRRL Y-65 / CBS 138) (Yeast), this protein is Adenylyltransferase and sulfurtransferase UBA4.